Reading from the N-terminus, the 356-residue chain is Heat-inducible transcription repressor HrcA (356 aa).

The protein belongs to the HrcA family.

Negative regulator of class I heat shock genes (grpE-dnaK-dnaJ and groELS operons). Prevents heat-shock induction of these operons. The protein is Heat-inducible transcription repressor HrcA of Chlorobaculum parvum (strain DSM 263 / NCIMB 8327) (Chlorobium vibrioforme subsp. thiosulfatophilum).